The following is a 640-amino-acid chain: Zinc finger and BTB domain-containing protein 22 (640 aa).

Residues 57–121 (CDVSIRVQGR…AYTGRLSMAA (65 aa)) form the BTB domain. Disordered stretches follow at residues 191–244 (RSHA…PVFP), 308–327 (PAPAPLVPQDPDLEEDEEED), and 332–482 (CEDD…GGTG). Polar residues predominate over residues 192 to 210 (SHASSRASENQSPSSSNYF). Ser-203 bears the Phosphoserine mark. The segment covering 318–327 (PDLEEDEEED) has biased composition (acidic residues). A compositionally biased stretch (low complexity) spans 431–442 (SSSSSSSSSSSS). The segment covering 469–482 (GMPGGPGGTPGGTG) has biased composition (gly residues). A C2H2-type 1; atypical zinc finger spans residues 490–511 (FLCHCGKAFSHKSMRDRHVNMH). 2 C2H2-type zinc fingers span residues 517–539 (FDCPVCNKKFKMKHHLTEHMKTH) and 545–571 (YECGVCAKKFMWRDSFMRHRGHCERRH). A disordered region spans residues 571-640 (HRLVGGGGGG…MGFGGGGGTN (70 aa)). Gly residues predominate over residues 574-588 (VGGGGGGGPGPGGPT).

It belongs to the krueppel C2H2-type zinc-finger protein family.

It localises to the nucleus. Functionally, may be involved in transcriptional regulation. In Canis lupus familiaris (Dog), this protein is Zinc finger and BTB domain-containing protein 22 (ZBTB22).